The sequence spans 282 residues: Shikimate dehydrogenase (NADP(+)) (282 aa).

Shikimate contacts are provided by residues 15-17 and T62; that span reads SKS. Catalysis depends on K66, which acts as the Proton acceptor. 2 residues coordinate shikimate: N87 and D103. Residues 127–131, 151–156, and M220 contribute to the NADP(+) site; these read GAGGA and NRTHTK. Y222 is a binding site for shikimate. G244 lines the NADP(+) pocket.

Belongs to the shikimate dehydrogenase family. As to quaternary structure, homodimer.

The catalysed reaction is shikimate + NADP(+) = 3-dehydroshikimate + NADPH + H(+). The protein operates within metabolic intermediate biosynthesis; chorismate biosynthesis; chorismate from D-erythrose 4-phosphate and phosphoenolpyruvate: step 4/7. Its function is as follows. Involved in the biosynthesis of the chorismate, which leads to the biosynthesis of aromatic amino acids. Catalyzes the reversible NADPH linked reduction of 3-dehydroshikimate (DHSA) to yield shikimate (SA). The sequence is that of Shikimate dehydrogenase (NADP(+)) from Shewanella baltica (strain OS195).